The sequence spans 236 residues: UPF0177 protein YaiH (236 aa).

6 helical membrane passes run 16 to 36, 51 to 71, 90 to 110, 131 to 151, 180 to 200, and 210 to 230; these read YFSLFILLFAIYWFPDVILGY, ATATWIFLGNMAISLFLGILI, ILFLLFTTIVLFIIYFFTFTY, IVFPFVQFISFAICAPIFEEA, TGANPILIVYLPMSVVLTLIY, and ILVHCLMNALLPTIIVFLQTI.

The protein belongs to the UPF0177 family.

The protein resides in the cell membrane. The chain is UPF0177 protein YaiH (yaiH) from Lactococcus lactis subsp. lactis (strain IL1403) (Streptococcus lactis).